We begin with the raw amino-acid sequence, 391 residues long: Small ribosomal subunit protein bS1 (391 aa).

4 consecutive S1 motif domains span residues 16–90 (GDKV…LSRR), 108–173 (NEII…LSRK), 194–262 (GDVI…LSIK), and 279–348 (NDDI…LSIK). The interval 356–381 (VVESDPSTTKAYLESEEEDNPTIGDM) is disordered.

It belongs to the bacterial ribosomal protein bS1 family.

Binds mRNA; thus facilitating recognition of the initiation point. It is needed to translate mRNA with a short Shine-Dalgarno (SD) purine-rich sequence. This is Small ribosomal subunit protein bS1 (rpsA) from Staphylococcus aureus (strain MRSA252).